The following is a 294-amino-acid chain: Potassium-transporting ATPase subunit beta (294 aa).

Residues methionine 1 to arginine 36 are Cytoplasmic-facing. Residues tryptophan 37–leucine 57 traverse the membrane as a helical; Signal-anchor for type II membrane protein segment. Residues cysteine 58 to lysine 294 lie on the Extracellular side of the membrane. Asparagine 99, asparagine 103, asparagine 130, asparagine 146, and asparagine 161 each carry an N-linked (GlcNAc...) asparagine glycan. Cysteine 131 and cysteine 152 are disulfide-bonded. Cysteine 162 and cysteine 178 are disulfide-bonded. Residues asparagine 193 and asparagine 225 are each glycosylated (N-linked (GlcNAc...) asparagine). An immunoglobulin-like region spans residues asparagine 194–lysine 294. Residues cysteine 201 and cysteine 266 are joined by a disulfide bond.

Belongs to the X(+)/potassium ATPases subunit beta family. The ATPase pump is composed of two subunits: alpha (catalytic) and beta (regulatory). Interacts with alpha subunit ATP12A; this interaction is required for the formation of a functionally active pump and targeting at the plasma membrane. Interacts (via N-terminus) with alpha subunit ATP4A (via the P-domain). In terms of processing, N-glycosylation is necessary for assembly and functional expression of the pump at the plasma membrane. In terms of tissue distribution, expressed in parietal cells (at protein level).

It localises to the apical cell membrane. It is found in the cell membrane. The beta subunit of the gastric H(+)/K(+) ATPase pump which transports H(+) ions in exchange for K(+) ions across the apical membrane of parietal cells. Plays a structural and regulatory role in the assembly and membrane targeting of a functionally active pump. Within a transport cycle, the transfer of a H(+) ion across the membrane is coupled to ATP hydrolysis and is associated with a transient phosphorylation of the alpha subunit that shifts the pump conformation from inward-facing (E1) to outward-facing state (E2). Interacts with the phosphorylation domain of the alpha subunit and functions as a ratchet, stabilizing the lumenal-open E2 conformation and preventing the reverse reaction of the transport cycle. This chain is Potassium-transporting ATPase subunit beta (Atp4b), found in Mus musculus (Mouse).